The sequence spans 739 residues: DNA ligase (739 aa).

Position 34–38 (34–38 (DADYD)) interacts with NAD(+). Residues 49–59 (ARFPHLKRPDS) show a composition bias toward basic and acidic residues. The segment at 49–70 (ARFPHLKRPDSPSEQVGARPGE) is disordered. NAD(+)-binding positions include 83 to 84 (SL) and Glu117. The active-site N6-AMP-lysine intermediate is the Lys119. The NAD(+) site is built by Arg140, Glu175, Lys291, and Lys315. Residues Cys420, Cys423, Cys438, and Cys444 each contribute to the Zn(2+) site. Residues 660–739 (ARDSPVAGKT…DGWLKLIEGL (80 aa)) enclose the BRCT domain.

This sequence belongs to the NAD-dependent DNA ligase family. LigA subfamily. Mg(2+) is required as a cofactor. It depends on Mn(2+) as a cofactor.

It catalyses the reaction NAD(+) + (deoxyribonucleotide)n-3'-hydroxyl + 5'-phospho-(deoxyribonucleotide)m = (deoxyribonucleotide)n+m + AMP + beta-nicotinamide D-nucleotide.. DNA ligase that catalyzes the formation of phosphodiester linkages between 5'-phosphoryl and 3'-hydroxyl groups in double-stranded DNA using NAD as a coenzyme and as the energy source for the reaction. It is essential for DNA replication and repair of damaged DNA. This Ruegeria pomeroyi (strain ATCC 700808 / DSM 15171 / DSS-3) (Silicibacter pomeroyi) protein is DNA ligase.